The following is a 75-amino-acid chain: Large ribosomal subunit protein bL31 (75 aa).

Part of the 50S ribosomal subunit.

Functionally, binds the 23S rRNA. The protein is Large ribosomal subunit protein bL31 of Rhodopseudomonas palustris (strain ATCC BAA-98 / CGA009).